A 246-amino-acid polypeptide reads, in one-letter code: 2-C-methyl-D-erythritol 4-phosphate cytidylyltransferase (246 aa).

The protein belongs to the IspD/TarI cytidylyltransferase family. IspD subfamily.

The enzyme catalyses 2-C-methyl-D-erythritol 4-phosphate + CTP + H(+) = 4-CDP-2-C-methyl-D-erythritol + diphosphate. The protein operates within isoprenoid biosynthesis; isopentenyl diphosphate biosynthesis via DXP pathway; isopentenyl diphosphate from 1-deoxy-D-xylulose 5-phosphate: step 2/6. Functionally, catalyzes the formation of 4-diphosphocytidyl-2-C-methyl-D-erythritol from CTP and 2-C-methyl-D-erythritol 4-phosphate (MEP). This Clostridium tetani (strain Massachusetts / E88) protein is 2-C-methyl-D-erythritol 4-phosphate cytidylyltransferase.